The primary structure comprises 785 residues: Semaphorin-3F (785 aa).

Positions 1–18 (MLVAGLLLWASLLTGAWP) are cleaved as a signal peptide. The region spanning 31 to 545 (RVRLSFKELK…SAVGVTHLSL (515 aa)) is the Sema domain. Asn53 carries an N-linked (GlcNAc...) asparagine glycan. Cys104 and Cys115 are joined by a disulfide. Asn126 carries an N-linked (GlcNAc...) asparagine glycan. 5 disulfides stabilise this stretch: Cys133–Cys142, Cys300–Cys412, Cys324–Cys372, Cys548–Cys566, and Cys678–Cys746. The Ig-like C2-type domain maps to 605-690 (ANKNAVESVQ…TENNFKHVVT (86 aa)). A disordered region spans residues 752-785 (HVPPSPREAPGAPRSPEPQDQKKPRNRRHHPPDT). A compositionally biased stretch (basic residues) spans 775 to 785 (PRNRRHHPPDT).

The protein belongs to the semaphorin family. In terms of tissue distribution, expressed abundantly but differentially in a variety of neural and nonneural tissues. There is high expression in mammary gland, kidney, fetal brain, and lung and lower expression in heart and liver.

The protein localises to the secreted. May play a role in cell motility and cell adhesion. In Homo sapiens (Human), this protein is Semaphorin-3F (SEMA3F).